The following is a 922-amino-acid chain: MNVEQFAQELKLPPQLLLEQLKAAGVSKNDVVDPVTEADKAHLLDYLRKMHGGGGGETGKTKITITRKQTGEIRKTDSTGKSRTIQVEVRKSRTYVKRDPAALAAEALAAAEPAAAAPAAPPPALEEVPAEPAPIEAQAPVAETPAAEPAVVEAPAPEPAVTAEVTAPAPVEAAPEPAPAAKPEGEAAPVKKTTRIKKASILNEAEVKAREDEARRHQALLERQAADAKARIEREALRKQAEAAREAAKLAEAQKAAAPAPAAPTEKTLHKPDKPAAAKGAKGPDKKPAGAWKDDAARRRGGLKTRGGAAPDAGWRGRKGKSKSGQEETTFVAPTEPIVREVLVPETITVAELAHKMSVKAAEVIKALMKLGSMVTINQVLDQETAIIVVEEMGHIGKPAALDTPEAFLIETGEPGEAEMVARPPVVTVMGHVDHGKTSLLDTIRRTRVASGEAGGITQHIGAYHVETEKGVITFLDTPGHEAFTAMRARGAKATDIVVLVVAADDGVMPQTIEAIHHAKAAGVPLVVAVNKIDKPDANPERIRQELVAQGVTPEEWGGDTQFVEVSAKANTNINGLLDAILLQAEVLELQAPADGPAKGIVIEARLDKGKGPVATLLVQSGTLRRGDMVLAGQVYGRVRAMLDEAGKTVTEAGPSIPVEIQGLSDVPQAGEDMMVLPDERKAREIALFRQGKYRDVQLAKKQAAKLESMFDQMGQGEVQHLPIILKADMQGSYEGLAHALGKISTDEVKVNIIHSGVGAITESDVNLALASKAVLIGFNVRADASARKLAESSGVDIRYYNIIYEAVDEVKAALSGMLAPEKKESVIGTVEVRQVFVISKVGTIAGCYVTDGVVKRGAGVRLIRNNVVIHQGELDSLKRFKDDVKEVKANFECGLSLKNFNDIQEGDILEVFEVVEVARSL.

The segment at 243-329 (AAREAAKLAE…GKSKSGQEET (87 aa)) is disordered. A compositionally biased stretch (low complexity) spans 250 to 264 (LAEAQKAAAPAPAAP). The span at 267–298 (KTLHKPDKPAAAKGAKGPDKKPAGAWKDDAAR) shows a compositional bias: basic and acidic residues. The tr-type G domain occupies 422–589 (ARPPVVTVMG…AILLQAEVLE (168 aa)). The G1 stretch occupies residues 431 to 438 (GHVDHGKT). Residue 431–438 (GHVDHGKT) participates in GTP binding. Positions 456 to 460 (GITQH) are G2. Residues 477–480 (DTPG) are G3. Residues 477–481 (DTPGH) and 531–534 (NKID) each bind GTP. A G4 region spans residues 531–534 (NKID). Residues 567–569 (SAK) form a G5 region.

It belongs to the TRAFAC class translation factor GTPase superfamily. Classic translation factor GTPase family. IF-2 subfamily.

The protein localises to the cytoplasm. In terms of biological role, one of the essential components for the initiation of protein synthesis. Protects formylmethionyl-tRNA from spontaneous hydrolysis and promotes its binding to the 30S ribosomal subunits. Also involved in the hydrolysis of GTP during the formation of the 70S ribosomal complex. The protein is Translation initiation factor IF-2 of Thiobacillus denitrificans (strain ATCC 25259 / T1).